Reading from the N-terminus, the 232-residue chain is Ubiquinone biosynthesis O-methyltransferase (232 aa).

The S-adenosyl-L-methionine site is built by Arg-36, Gly-55, Asp-76, and Leu-120.

It belongs to the methyltransferase superfamily. UbiG/COQ3 family.

The enzyme catalyses a 3-demethylubiquinol + S-adenosyl-L-methionine = a ubiquinol + S-adenosyl-L-homocysteine + H(+). It carries out the reaction a 3-(all-trans-polyprenyl)benzene-1,2-diol + S-adenosyl-L-methionine = a 2-methoxy-6-(all-trans-polyprenyl)phenol + S-adenosyl-L-homocysteine + H(+). The protein operates within cofactor biosynthesis; ubiquinone biosynthesis. Functionally, O-methyltransferase that catalyzes the 2 O-methylation steps in the ubiquinone biosynthetic pathway. The sequence is that of Ubiquinone biosynthesis O-methyltransferase from Pseudomonas savastanoi pv. phaseolicola (strain 1448A / Race 6) (Pseudomonas syringae pv. phaseolicola (strain 1448A / Race 6)).